A 186-amino-acid polypeptide reads, in one-letter code: Peptidyl-tRNA hydrolase (186 aa).

Tyr-16 contributes to the tRNA binding site. The Proton acceptor role is filled by His-21. Residues Tyr-60 and Asn-62 each contribute to the tRNA site.

Belongs to the PTH family. In terms of assembly, monomer.

It is found in the cytoplasm. It catalyses the reaction an N-acyl-L-alpha-aminoacyl-tRNA + H2O = an N-acyl-L-amino acid + a tRNA + H(+). Functionally, hydrolyzes ribosome-free peptidyl-tRNAs (with 1 or more amino acids incorporated), which drop off the ribosome during protein synthesis, or as a result of ribosome stalling. In terms of biological role, catalyzes the release of premature peptidyl moieties from peptidyl-tRNA molecules trapped in stalled 50S ribosomal subunits, and thus maintains levels of free tRNAs and 50S ribosomes. This Tropheryma whipplei (strain TW08/27) (Whipple's bacillus) protein is Peptidyl-tRNA hydrolase.